Here is a 173-residue protein sequence, read N- to C-terminus: Alpha-crystallin A chain (173 aa).

M1 carries the N-acetylmethionine modification. Positions 1-63 are required for complex formation with BFSP1 and BFSP2; sequence MDVTIQHPWF…RTVLDSGISE (63 aa). Q6 bears the Deamidated glutamine; partial mark. S45 is modified (phosphoserine). Q50 is modified (deamidated glutamine; partial). The sHSP domain maps to 52–162; it reads LFRTVLDSGI…GHSERAIPVS (111 aa). Residue K70 is modified to N6-acetyllysine. Q90 carries the deamidated glutamine; partial modification. K99 carries the post-translational modification N6-acetyllysine. H100 provides a ligand contact to Zn(2+). Deamidated asparagine; partial is present on N101. Positions 102 and 107 each coordinate Zn(2+). Residue S122 is modified to Phosphoserine. N123 bears the Deamidated asparagine; partial mark. Residues 145–173 are disordered; it reads KVQSGLDAGHSERAIPVSREEKPSSAPSS. Q147 bears the Deamidated glutamine; partial mark. Residues 153-167 are compositionally biased toward basic and acidic residues; sequence GHSERAIPVSREEKP. H154 contacts Zn(2+). A glycan (O-linked (GlcNAc) serine) is linked at S162.

The protein belongs to the small heat shock protein (HSP20) family. Heteromer composed of three CRYAA and one CRYAB subunits. Inter-subunit bridging via zinc ions enhances stability, which is crucial as there is no protein turn over in the lens. Can also form homodimers and homotetramers (dimers of dimers) which serve as the building blocks of homooligomers. Within homooligomers, the zinc-binding motif is created from residues of 3 different molecules. His-100 and Glu-102 from one molecule are ligands of the zinc ion, and His-107 and His-154 residues from additional molecules complete the site with tetrahedral coordination geometry. Part of a complex required for lens intermediate filament formation composed of BFSP1, BFSP2 and CRYAA. In terms of processing, acetylation at Lys-70 may increase chaperone activity. Undergoes age-dependent proteolytical cleavage at the C-terminus.

The protein localises to the cytoplasm. It localises to the nucleus. Its function is as follows. Contributes to the transparency and refractive index of the lens. Acts as a chaperone, preventing aggregation of various proteins under a wide range of stress conditions. Required for the correct formation of lens intermediate filaments as part of a complex composed of BFSP1, BFSP2 and CRYAA. This is Alpha-crystallin A chain (CRYAA) from Cavia porcellus (Guinea pig).